The primary structure comprises 256 residues: Pimeloyl-[acyl-carrier protein] methyl ester esterase (256 aa).

The 228-residue stretch at 15–242 (HLVLLHGWGL…AAHAPFISHP (228 aa)) folds into the AB hydrolase-1 domain. Substrate is bound by residues tryptophan 22, 82–83 (SL), and 143–147 (FLALQ). Residue serine 82 is the Nucleophile of the active site. Active-site residues include aspartate 207 and histidine 235. Histidine 235 is a binding site for substrate.

Belongs to the AB hydrolase superfamily. Carboxylesterase BioH family. Monomer.

Its subcellular location is the cytoplasm. The enzyme catalyses 6-carboxyhexanoyl-[ACP] methyl ester + H2O = 6-carboxyhexanoyl-[ACP] + methanol + H(+). Its pathway is cofactor biosynthesis; biotin biosynthesis. The physiological role of BioH is to remove the methyl group introduced by BioC when the pimeloyl moiety is complete. It allows to synthesize pimeloyl-ACP via the fatty acid synthetic pathway through the hydrolysis of the ester bonds of pimeloyl-ACP esters. The protein is Pimeloyl-[acyl-carrier protein] methyl ester esterase of Escherichia coli (strain 55989 / EAEC).